The following is a 688-amino-acid chain: Glycine--tRNA ligase beta subunit (688 aa).

The protein belongs to the class-II aminoacyl-tRNA synthetase family. Tetramer of two alpha and two beta subunits.

The protein resides in the cytoplasm. The catalysed reaction is tRNA(Gly) + glycine + ATP = glycyl-tRNA(Gly) + AMP + diphosphate. This Clostridioides difficile (strain 630) (Peptoclostridium difficile) protein is Glycine--tRNA ligase beta subunit.